Reading from the N-terminus, the 90-residue chain is Probable Fe(2+)-trafficking protein (90 aa).

This sequence belongs to the Fe(2+)-trafficking protein family.

In terms of biological role, could be a mediator in iron transactions between iron acquisition and iron-requiring processes, such as synthesis and/or repair of Fe-S clusters in biosynthetic enzymes. This chain is Probable Fe(2+)-trafficking protein, found in Thioalkalivibrio sulfidiphilus (strain HL-EbGR7).